The following is a 96-amino-acid chain: Guanine nucleotide-binding protein alpha-9 subunit (96 aa).

The G-alpha domain occupies 2–96 (YFHSTAIILF…ISASLKMVGV (95 aa)). The G1 motif stretch occupies residues 9-16 (ILFLNKID). GTP contacts are provided by residues 13-16 (NKID) and Ala-69. Positions 67-72 (TSATDT) are G2 motif.

Belongs to the G-alpha family. G proteins are composed of 3 units; alpha, beta and gamma. The alpha chain contains the guanine nucleotide binding site. As to expression, expressed in ASJ neurons.

Guanine nucleotide-binding proteins (G proteins) are involved as modulators or transducers in various transmembrane signaling systems. Plays a role in innate immunity and maintaining survival in response to metabolites of E.coli. This might be by regulating the expression and signaling of genes such as lys-8, ins-7 and daf-28. Has a role in lifespan to promote longevity. In Caenorhabditis elegans, this protein is Guanine nucleotide-binding protein alpha-9 subunit.